Reading from the N-terminus, the 845-residue chain is ABC transporter A family member 9 (845 aa).

The next 7 membrane-spanning stretches (helical) occupy residues 33–53 (CVQISIPLILVIILVIVNFWV), 192–212 (AFVAFSMNTMTTTILNYFLGG), 235–255 (IASLLGGSFYPFALSFIMPLF), 292–312 (IYFIIIVFVVGVSSIFGFAVF), 318–338 (FAMFLFLFAWGNSMITFSFFL), 347–367 (AASIFGYFLVIIAVNLNSILS), and 417–437 (SKIIFWLYIDAIVYLLIALYL). The region spanning 531–762 (VIIEGLTKHY…FGDGYSVRIN (232 aa)) is the ABC transporter domain. Residue 565 to 572 (GANGAGKT) participates in ATP binding.

Belongs to the ABC transporter superfamily. ABCA family.

Its subcellular location is the membrane. The sequence is that of ABC transporter A family member 9 (abcA9) from Dictyostelium discoideum (Social amoeba).